We begin with the raw amino-acid sequence, 1122 residues long: Maestro heat-like repeat-containing protein family member 7 (1122 aa).

Disordered regions lie at residues 1 to 144 (MALS…LSED) and 183 to 203 (SHTISRQSSQTPLLLPSNTSL). Low complexity predominate over residues 33 to 65 (TTPRPTPDLTLAPLPAHGVALAPALHPALSPDP). Composition is skewed to polar residues over residues 75–95 (DISNPNASGAATPSSIQINTA), 120–136 (PVPSLSSTQATVLSPEN), and 184–203 (HTISRQSSQTPLLLPSNTSL). Asparagine 200, asparagine 210, asparagine 255, asparagine 267, and asparagine 296 each carry an N-linked (GlcNAc...) asparagine glycan. The tract at residues 246 to 265 (WNTGSKGSVNVTSNSQPRSG) is disordered. Serine 356 carries the post-translational modification Phosphoserine. The disordered stretch occupies residues 363–385 (FRSPPEGTSEDAKANESEKRDHD). Residues 372–385 (EDAKANESEKRDHD) are compositionally biased toward basic and acidic residues. 2 N-linked (GlcNAc...) asparagine glycosylation sites follow: asparagine 541 and asparagine 546. Helical transmembrane passes span 548 to 568 (TLVTLPFFVSSGFPTLGLLLG) and 722 to 742 (LLPISFLASSFMTEVVVALLM). HEAT repeat units follow at residues 913 to 950 (QELCRILYLLIPLLERGDERHKITATAFFVELFRMEQV), 992 to 1029 (TKVQGLLPSMVKSLKNMDGVLVMEAVHDLKTIFKGQAK), 1035 to 1072 (SVYIEMLQTLLPHFIDARETVRTSCINTYGKVVKKLRM), and 1080 to 1117 (EQLTSTLMPLLFIIQEGNAKVSQHFPLEFHTAGIFFLL).

The protein resides in the membrane. The chain is Maestro heat-like repeat-containing protein family member 7 (Mroh7) from Rattus norvegicus (Rat).